The primary structure comprises 227 residues: Paired immunoglobulin-like type 2 receptor beta (227 aa).

The signal sequence occupies residues 1-19 (MGRPLLLPLLLLLQPPAFL). Over 20 to 191 (QPGGSTGSGP…WHLSLDTAIR (172 aa)) the chain is Extracellular. The region spanning 21 to 143 (PGGSTGSGPS…SGRQQLQSIK (123 aa)) is the Ig-like V-type domain. Asn100 carries an N-linked (GlcNAc...) asparagine glycan. A helical membrane pass occupies residues 192 to 212 (VALAVAVLKTVILGLLCLLLL). Over 213–227 (WWRRRKGSRAPSSDF) the chain is Cytoplasmic.

The protein resides in the membrane. Paired receptors consist of highly related activating and inhibitory receptors and are widely involved in the regulation of the immune system. PILRB is thought to act as a cellular signaling activating receptor that associates with ITAM-bearing adapter molecules on the cell surface. In Homo sapiens (Human), this protein is Paired immunoglobulin-like type 2 receptor beta (PILRB).